A 133-amino-acid chain; its full sequence is 6,7-dimethyl-8-ribityllumazine synthase (133 aa).

Residues Phe-11, 43–45, and 67–69 contribute to the 5-amino-6-(D-ribitylamino)uracil site; these read AYD and AIV. 72–73 contributes to the (2S)-2-hydroxy-3-oxobutyl phosphate binding site; the sequence is DT. The Proton donor role is filled by His-75. Phe-100 serves as a coordination point for 5-amino-6-(D-ribitylamino)uracil. Position 115 (Arg-115) interacts with (2S)-2-hydroxy-3-oxobutyl phosphate.

This sequence belongs to the DMRL synthase family.

It carries out the reaction (2S)-2-hydroxy-3-oxobutyl phosphate + 5-amino-6-(D-ribitylamino)uracil = 6,7-dimethyl-8-(1-D-ribityl)lumazine + phosphate + 2 H2O + H(+). It participates in cofactor biosynthesis; riboflavin biosynthesis; riboflavin from 2-hydroxy-3-oxobutyl phosphate and 5-amino-6-(D-ribitylamino)uracil: step 1/2. Functionally, catalyzes the formation of 6,7-dimethyl-8-ribityllumazine by condensation of 5-amino-6-(D-ribitylamino)uracil with 3,4-dihydroxy-2-butanone 4-phosphate. This is the penultimate step in the biosynthesis of riboflavin. This chain is 6,7-dimethyl-8-ribityllumazine synthase, found in Halobacterium salinarum (strain ATCC 29341 / DSM 671 / R1).